A 348-amino-acid polypeptide reads, in one-letter code: Protein RecA (348 aa).

67–74 is an ATP binding site; the sequence is GPESSGKT.

Belongs to the RecA family.

The protein resides in the cytoplasm. Its function is as follows. Can catalyze the hydrolysis of ATP in the presence of single-stranded DNA, the ATP-dependent uptake of single-stranded DNA by duplex DNA, and the ATP-dependent hybridization of homologous single-stranded DNAs. It interacts with LexA causing its activation and leading to its autocatalytic cleavage. The sequence is that of Protein RecA from Kineococcus radiotolerans (strain ATCC BAA-149 / DSM 14245 / SRS30216).